Consider the following 392-residue polypeptide: Gastricsin (392 aa).

The N-terminal stretch at 1-16 is a signal peptide; that stretch reads MKWMVVALLCLPLLEA. Positions 17–62 are cleaved as a propeptide — activation peptide; sequence SLLRVPLRKMKSIRETMKEQGVLKDFLKTHKYDPGQKYHFGNFGDY. The Peptidase A1 domain maps to 76-389; the sequence is YFGEISIGTP…DMGNNKVGLA (314 aa). Residue Asp-94 is part of the active site. 2 disulfide bridges follow: Cys-107–Cys-112 and Cys-270–Cys-275. The active site involves Asp-280. A disulfide bridge connects residues Cys-314 and Cys-347.

The protein belongs to the peptidase A1 family.

It localises to the secreted. It carries out the reaction More restricted specificity than pepsin A, but shows preferential cleavage at Tyr-|-Xaa bonds. High activity on hemoglobin.. In terms of biological role, hydrolyzes a variety of proteins. This is Gastricsin (Pgc) from Rattus norvegicus (Rat).